Reading from the N-terminus, the 242-residue chain is Small ribosomal subunit protein uS2 (242 aa).

Belongs to the universal ribosomal protein uS2 family.

This is Small ribosomal subunit protein uS2 from Shewanella baltica (strain OS223).